The primary structure comprises 68 residues: Large ribosomal subunit protein uL29 (68 aa).

Belongs to the universal ribosomal protein uL29 family.

The sequence is that of Large ribosomal subunit protein uL29 from Bradyrhizobium sp. (strain BTAi1 / ATCC BAA-1182).